Reading from the N-terminus, the 201-residue chain is MKNPIIDNIPCVLLAGGKSSRFITNNIQTNKALMPLKSYSSLLEYQYTRLLKLFKKVIISTKKSYELNAPYLLEKESDLFSPLFGIHNAFLTLQTPYIFFIPIDTPLVSFESIKALCGIKNFSVTYAKSPTKEHYLISLWHQNTLNALIYALKTQNYRLSDLVKNTSSVAINFDKEEEFLNLNTLKDYELAVQILKKRANG.

GTP is bound by residues 14-16, K31, and D104; that span reads LAG. D104 is a Mg(2+) binding site.

Belongs to the MobA family. Monomer. Mg(2+) is required as a cofactor.

The protein localises to the cytoplasm. The catalysed reaction is Mo-molybdopterin + GTP + H(+) = Mo-molybdopterin guanine dinucleotide + diphosphate. In terms of biological role, transfers a GMP moiety from GTP to Mo-molybdopterin (Mo-MPT) cofactor (Moco or molybdenum cofactor) to form Mo-molybdopterin guanine dinucleotide (Mo-MGD) cofactor. The protein is Molybdenum cofactor guanylyltransferase of Helicobacter pylori (strain ATCC 700392 / 26695) (Campylobacter pylori).